A 402-amino-acid chain; its full sequence is Arabinosyltransferase RRA1 (402 aa).

Residues 1-13 lie on the Cytoplasmic side of the membrane; sequence MAVRKEKVQPFRE. A helical; Signal-anchor for type II membrane protein membrane pass occupies residues 14–34; that stretch reads CGIAIAVLVGIFIGCVCTILI. Residues 35–402 lie on the Lumenal side of the membrane; that stretch reads PNDFVNFRSS…DALDRFRDGS (368 aa). The DXD motif motif lies at 225–227; the sequence is DVD. Residue Asn-253 is glycosylated (N-linked (GlcNAc...) asparagine).

The protein belongs to the glycosyltransferase 77 family. In terms of tissue distribution, expressed in leaf meristem and at points of cauline leaf attachments on the primary stem. Expressed at low levels in siliques.

It is found in the golgi apparatus membrane. In terms of biological role, plays a role in the arabinosylation of cell wall components. Involved in the arabinosylation of extensin proteins in root hair cells. Extensins are structural glycoproteins present in cell walls and its arabinosylation is important for root hair cell development. This Arabidopsis thaliana (Mouse-ear cress) protein is Arabinosyltransferase RRA1.